Reading from the N-terminus, the 593-residue chain is MTADNAIFIPPYKADDQDVVVELHNRFGAEAFVAQETRTGMPVLWVKRAQLKEVLSFLRGVSKPYSMLYDLHGVDERLRTQRRGLPAADFSVFYHLLSVERNSDVMIKVSLSEGDLNLPTVTGIWPNANWYEREVWDMFGIDFAGHPHLSRIMMPPTWEGHPLRKDYPARATEFDPYSLTLAKQQLEEESARFNPEAWGMKRQGANEDYMFLNLGPNHPSAHGAFRIVLQLDGEEIVDCVPDIGYHHRGAEKMAERQSWHSFIPYTDRIDYLGGVMNNLPYVLAVEKLAGIQVPQKVDVIRIMLAEFFRITSHLLFLGTYIQDVGAMTPVFFTFTDRQRAYTVIEAITGFRLHPAWYRIGGVAHDLPRGWEKLVKDFVEWLPKRLDEYTKAALQNSILKGRTIGVAAYNTKEALEWGTTGAGLRATGCDFDLRKARPYSGYENFEFEVPLAHNGDAYDRCMVRVEEMRQSIRIIDQCLRNMPEGPYKADHPLTTPPPKERTLQHIETLITHFLQVSWGPVMPANESFQMIEATKGINSYYLTSDGGTMSYRTRIRTPSYPHLQQIPSVIKGSMVADLIAYLGSIDFVMADVDR.

Residues 1 to 184 (MTADNAIFIP…DPYSLTLAKQ (184 aa)) are NADH dehydrogenase I subunit C. Residues 208–593 (DYMFLNLGPN…IDFVMADVDR (386 aa)) are NADH dehydrogenase I subunit D.

The protein in the N-terminal section; belongs to the complex I 30 kDa subunit family. This sequence in the C-terminal section; belongs to the complex I 49 kDa subunit family. NDH-1 is composed of 13 different subunits. Subunits NuoB, CD, E, F, and G constitute the peripheral sector of the complex.

The protein resides in the cell inner membrane. The enzyme catalyses a quinone + NADH + 5 H(+)(in) = a quinol + NAD(+) + 4 H(+)(out). NDH-1 shuttles electrons from NADH, via FMN and iron-sulfur (Fe-S) centers, to quinones in the respiratory chain. The immediate electron acceptor for the enzyme in this species is believed to be ubiquinone. Couples the redox reaction to proton translocation (for every two electrons transferred, four hydrogen ions are translocated across the cytoplasmic membrane), and thus conserves the redox energy in a proton gradient. The chain is NADH-quinone oxidoreductase subunit C/D from Pseudomonas putida (strain W619).